The primary structure comprises 373 residues: 3 beta-hydroxysteroid dehydrogenase/Delta 5--&gt;4-isomerase (373 aa).

Residue Tyr-155 is the Proton acceptor of the active site. Residue Lys-159 participates in NAD(+) binding. Residues 288 to 308 form a helical membrane-spanning segment; that stretch reads IFLKYWLAFLLEIVSFLLSPI.

The protein belongs to the 3-beta-HSD family.

Its subcellular location is the endoplasmic reticulum membrane. It is found in the mitochondrion membrane. It catalyses the reaction a 3beta-hydroxy-Delta(5)-steroid + NAD(+) = a 3-oxo-Delta(5)-steroid + NADH + H(+). The enzyme catalyses a 3-oxo-Delta(5)-steroid = a 3-oxo-Delta(4)-steroid. The protein operates within lipid metabolism; steroid biosynthesis. Functionally, 3-beta-HSD is a bifunctional enzyme, that catalyzes the oxidative conversion of Delta(5)-ene-3-beta-hydroxy steroid, and the oxidative conversion of ketosteroids. The 3-beta-HSD enzymatic system plays a crucial role in the biosynthesis of all classes of hormonal steroids. The protein is 3 beta-hydroxysteroid dehydrogenase/Delta 5--&gt;4-isomerase (HSD3B) of Equus caballus (Horse).